Consider the following 49-residue polypeptide: Large ribosomal subunit protein bL33B (49 aa).

This sequence belongs to the bacterial ribosomal protein bL33 family.

The chain is Large ribosomal subunit protein bL33B from Acholeplasma laidlawii (strain PG-8A).